The following is a 443-amino-acid chain: Thymidine phosphorylase (443 aa).

The protein belongs to the thymidine/pyrimidine-nucleoside phosphorylase family. Homodimer.

The enzyme catalyses thymidine + phosphate = 2-deoxy-alpha-D-ribose 1-phosphate + thymine. Its pathway is pyrimidine metabolism; dTMP biosynthesis via salvage pathway; dTMP from thymine: step 1/2. Its function is as follows. The enzymes which catalyze the reversible phosphorolysis of pyrimidine nucleosides are involved in the degradation of these compounds and in their utilization as carbon and energy sources, or in the rescue of pyrimidine bases for nucleotide synthesis. In Sodalis glossinidius (strain morsitans), this protein is Thymidine phosphorylase.